A 329-amino-acid polypeptide reads, in one-letter code: tRNA-modifying protein YgfZ (329 aa).

Folate is bound by residues tryptophan 27 and tryptophan 189.

It belongs to the tRNA-modifying YgfZ family.

The protein localises to the cytoplasm. Functionally, folate-binding protein involved in regulating the level of ATP-DnaA and in the modification of some tRNAs. It is probably a key factor in regulatory networks that act via tRNA modification, such as initiation of chromosomal replication. The chain is tRNA-modifying protein YgfZ from Cronobacter sakazakii (strain ATCC BAA-894) (Enterobacter sakazakii).